We begin with the raw amino-acid sequence, 342 residues long: Phosphoribosylformylglycinamidine cyclo-ligase (342 aa).

This sequence belongs to the AIR synthase family.

It is found in the cytoplasm. It carries out the reaction 2-formamido-N(1)-(5-O-phospho-beta-D-ribosyl)acetamidine + ATP = 5-amino-1-(5-phospho-beta-D-ribosyl)imidazole + ADP + phosphate + H(+). Its pathway is purine metabolism; IMP biosynthesis via de novo pathway; 5-amino-1-(5-phospho-D-ribosyl)imidazole from N(2)-formyl-N(1)-(5-phospho-D-ribosyl)glycinamide: step 2/2. The polypeptide is Phosphoribosylformylglycinamidine cyclo-ligase (Staphylococcus aureus (strain MRSA252)).